We begin with the raw amino-acid sequence, 353 residues long: Chloroplastic lipocalin (353 aa).

Low complexity predominate over residues 1 to 18; the sequence is MILLSSSISLSRPVSSQS. A disordered region spans residues 1–27; that stretch reads MILLSSSISLSRPVSSQSFSPPAATST. Residues 1 to 39 constitute a chloroplast transit peptide; that stretch reads MILLSSSISLSRPVSSQSFSPPAATSTRRSHSSVTVKCC. Cys163 and Cys299 form a disulfide bridge.

It belongs to the calycin superfamily. Lipocalin family. In terms of tissue distribution, expressed in leaves at low levels (at protein levels). Present in seeds.

It localises to the plastid. The protein localises to the chloroplast thylakoid lumen. In terms of biological role, lipocalin that prevents thylakoidal membrane lipids peroxidation and confers protection against oxidative stress, especially mediated by singlet oxygen in response to high light and other stress (e.g. heat shocks). Required for seed longevity by ensuring polyunsaturated lipids integrity. The polypeptide is Chloroplastic lipocalin (Arabidopsis thaliana (Mouse-ear cress)).